The chain runs to 501 residues: Carotenoid cleavage oxygenase (501 aa).

4 residues coordinate Fe cation: His162, His211, His314, and His494.

Belongs to the carotenoid oxygenase family. It depends on Fe(2+) as a cofactor.

In terms of biological role, catalyzes the oxidative cleavage of several carotenoids and apocarotenoids in vitro. The protein is Carotenoid cleavage oxygenase of Mycobacterium tuberculosis (strain CDC 1551 / Oshkosh).